The sequence spans 630 residues: tRNA uridine 5-carboxymethylaminomethyl modification enzyme MnmG (630 aa).

FAD is bound at residue 13 to 18; it reads GGGHAG. Residue 273-287 coordinates NAD(+); sequence GPRYCPSIEDKIHRF.

Belongs to the MnmG family. In terms of assembly, homodimer. Heterotetramer of two MnmE and two MnmG subunits. FAD is required as a cofactor.

It localises to the cytoplasm. NAD-binding protein involved in the addition of a carboxymethylaminomethyl (cmnm) group at the wobble position (U34) of certain tRNAs, forming tRNA-cmnm(5)s(2)U34. This Pseudomonas putida (strain ATCC 700007 / DSM 6899 / JCM 31910 / BCRC 17059 / LMG 24140 / F1) protein is tRNA uridine 5-carboxymethylaminomethyl modification enzyme MnmG.